The following is a 293-amino-acid chain: NAD kinase (293 aa).

Asp73 (proton acceptor) is an active-site residue. NAD(+)-binding positions include 73 to 74 (DG), 147 to 148 (NE), His158, Arg175, Asp177, 188 to 193 (TAYSLS), and Gln248.

The protein belongs to the NAD kinase family. A divalent metal cation is required as a cofactor.

It is found in the cytoplasm. The enzyme catalyses NAD(+) + ATP = ADP + NADP(+) + H(+). In terms of biological role, involved in the regulation of the intracellular balance of NAD and NADP, and is a key enzyme in the biosynthesis of NADP. Catalyzes specifically the phosphorylation on 2'-hydroxyl of the adenosine moiety of NAD to yield NADP. The polypeptide is NAD kinase (Photobacterium profundum (strain SS9)).